The primary structure comprises 174 residues: Small ribosomal subunit protein uS5 (174 aa).

The region spanning 19–82 (LREKMIAVNR…EQARRGMFKV (64 aa)) is the S5 DRBM domain.

Belongs to the universal ribosomal protein uS5 family. Part of the 30S ribosomal subunit. Contacts proteins S4 and S8.

Functionally, with S4 and S12 plays an important role in translational accuracy. Its function is as follows. Located at the back of the 30S subunit body where it stabilizes the conformation of the head with respect to the body. The protein is Small ribosomal subunit protein uS5 of Bordetella bronchiseptica (strain ATCC BAA-588 / NCTC 13252 / RB50) (Alcaligenes bronchisepticus).